The primary structure comprises 692 residues: Elongation factor G (692 aa).

The tr-type G domain occupies 8 to 283 (EDYRNFGIMA…AVVDYLPSPV (276 aa)). GTP contacts are provided by residues 17 to 24 (AHIDAGKT), 81 to 85 (DTPGH), and 135 to 138 (NKMD).

This sequence belongs to the TRAFAC class translation factor GTPase superfamily. Classic translation factor GTPase family. EF-G/EF-2 subfamily.

The protein localises to the cytoplasm. Functionally, catalyzes the GTP-dependent ribosomal translocation step during translation elongation. During this step, the ribosome changes from the pre-translocational (PRE) to the post-translocational (POST) state as the newly formed A-site-bound peptidyl-tRNA and P-site-bound deacylated tRNA move to the P and E sites, respectively. Catalyzes the coordinated movement of the two tRNA molecules, the mRNA and conformational changes in the ribosome. In Caulobacter vibrioides (strain ATCC 19089 / CIP 103742 / CB 15) (Caulobacter crescentus), this protein is Elongation factor G.